The following is a 741-amino-acid chain: Ethylene receptor (741 aa).

The next 3 helical transmembrane spans lie at 23 to 43 (ISDF…IYFV), 53 to 73 (WVLV…LINL), and 92 to 112 (VLTA…IPDL). Positions 65 and 69 each coordinate Cu cation. One can recognise a GAF domain in the interval 158–307 (DRHTILKTTL…VVADQVAVAL (150 aa)). Positions 350–589 (VMNHEMRTPM…TFIVKLGFPE (240 aa)) constitute a Histidine kinase domain. H353 carries the phosphohistidine; by autocatalysis modification. Residues 615-732 (KVLVMDDNGV…KMRSVLSELL (118 aa)) form the Response regulatory domain. Position 663 is a 4-aspartylphosphate (D663).

It belongs to the ethylene receptor family. Homodimer; disulfide-linked. Cu cation serves as cofactor. Post-translationally, activation probably requires a transfer of a phosphate group between a His in the transmitter domain and an Asp of the receiver domain.

It is found in the endoplasmic reticulum membrane. It carries out the reaction ATP + protein L-histidine = ADP + protein N-phospho-L-histidine.. Functionally, may act early in the ethylene signal transduction pathway, possibly as an ethylene receptor, or as a regulator of the pathway. The protein is Ethylene receptor (ETR1) of Malus domestica (Apple).